Consider the following 455-residue polypeptide: Phosphoglucosamine mutase (455 aa).

The Phosphoserine intermediate role is filled by Ser-102. Mg(2+) is bound by residues Ser-102, Asp-241, Asp-243, and Asp-245. Ser-102 carries the phosphoserine modification.

It belongs to the phosphohexose mutase family. Mg(2+) is required as a cofactor. Post-translationally, activated by phosphorylation.

The enzyme catalyses alpha-D-glucosamine 1-phosphate = D-glucosamine 6-phosphate. Functionally, catalyzes the conversion of glucosamine-6-phosphate to glucosamine-1-phosphate. The protein is Phosphoglucosamine mutase of Legionella pneumophila (strain Corby).